Here is a 519-residue protein sequence, read N- to C-terminus: uncharacterized protein (519 aa).

Belongs to the glycogen phosphorylase family.

This is an uncharacterized protein from Methanocaldococcus jannaschii (strain ATCC 43067 / DSM 2661 / JAL-1 / JCM 10045 / NBRC 100440) (Methanococcus jannaschii).